The chain runs to 298 residues: Triosephosphate isomerase, chloroplastic (298 aa).

Residues 1-18 are compositionally biased toward pro residues; the sequence is MAARRPSPPPASPPPPRP. The interval 1 to 32 is disordered; that stretch reads MAARRPSPPPASPPPPRPRSTTTTRTTSSASA. Residues 1–43 constitute a chloroplast transit peptide; it reads MAARRPSPPPASPPPPRPRSTTTTRTTSSASAAPAAAQRLVAM. The segment covering 19–32 has biased composition (low complexity); the sequence is RSTTTTRTTSSASA. Residues Asn54 and Lys56 each coordinate substrate. The Electrophile role is filled by His138. Residue Cys186 is modified to Cysteine derivative. The Proton acceptor role is filled by Glu208.

Belongs to the triosephosphate isomerase family. In terms of assembly, homodimer.

It is found in the plastid. The protein localises to the chloroplast. The catalysed reaction is D-glyceraldehyde 3-phosphate = dihydroxyacetone phosphate. It participates in carbohydrate biosynthesis; Calvin cycle. The sequence is that of Triosephosphate isomerase, chloroplastic from Secale cereale (Rye).